A 398-amino-acid chain; its full sequence is Phosphoglycerate kinase (398 aa).

Substrate contacts are provided by residues 23-25 (DLN), arginine 38, 61-64 (HFGR), arginine 120, and arginine 153. Residues lysine 203, glutamate 325, and 355–358 (GGDT) contribute to the ATP site.

Belongs to the phosphoglycerate kinase family. In terms of assembly, monomer.

It localises to the cytoplasm. It carries out the reaction (2R)-3-phosphoglycerate + ATP = (2R)-3-phospho-glyceroyl phosphate + ADP. It functions in the pathway carbohydrate degradation; glycolysis; pyruvate from D-glyceraldehyde 3-phosphate: step 2/5. The protein is Phosphoglycerate kinase of Sphingopyxis alaskensis (strain DSM 13593 / LMG 18877 / RB2256) (Sphingomonas alaskensis).